A 501-amino-acid polypeptide reads, in one-letter code: Endoglucanase 8 (501 aa).

Residues 1 to 35 form the signal peptide; the sequence is MKPRSSRDGHNAAAAAALLLAALVLSGDVLPAVVA. Residue D95 is the Nucleophile of the active site. N-linked (GlcNAc...) asparagine glycosylation occurs at N298. Residue H414 is part of the active site. N-linked (GlcNAc...) asparagine glycosylation occurs at N462. D465 is a catalytic residue. The N-linked (GlcNAc...) asparagine glycan is linked to N469. Residue E474 is part of the active site.

This sequence belongs to the glycosyl hydrolase 9 (cellulase E) family.

The protein resides in the secreted. The enzyme catalyses Endohydrolysis of (1-&gt;4)-beta-D-glucosidic linkages in cellulose, lichenin and cereal beta-D-glucans.. The protein is Endoglucanase 8 of Oryza sativa subsp. japonica (Rice).